A 154-amino-acid polypeptide reads, in one-letter code: Lipoprotein signal peptidase (154 aa).

Transmembrane regions (helical) follow at residues 7–27 (VLYL…KNYI), 58–78 (IFSG…AVVV), and 88–108 (NWLF…NFID). Residues aspartate 117 and aspartate 133 contribute to the active site. A helical membrane pass occupies residues 128–148 (IFNIADSAITVGIVLVFIYLI).

Belongs to the peptidase A8 family.

The protein localises to the cell membrane. The enzyme catalyses Release of signal peptides from bacterial membrane prolipoproteins. Hydrolyzes -Xaa-Yaa-Zaa-|-(S,diacylglyceryl)Cys-, in which Xaa is hydrophobic (preferably Leu), and Yaa (Ala or Ser) and Zaa (Gly or Ala) have small, neutral side chains.. Its pathway is protein modification; lipoprotein biosynthesis (signal peptide cleavage). Functionally, this protein specifically catalyzes the removal of signal peptides from prolipoproteins. The sequence is that of Lipoprotein signal peptidase from Lactobacillus gasseri (strain ATCC 33323 / DSM 20243 / BCRC 14619 / CIP 102991 / JCM 1131 / KCTC 3163 / NCIMB 11718 / NCTC 13722 / AM63).